The following is a 379-amino-acid chain: Probable pectin lyase A (379 aa).

A signal peptide spans 1–19 (MKFALLSGVAAGLLPVVSA). Disulfide bonds link cysteine 82-cysteine 101 and cysteine 91-cysteine 225. Arginine 255 is a catalytic residue. Cysteine 322 and cysteine 330 are joined by a disulfide.

This sequence belongs to the polysaccharide lyase 1 family.

The protein localises to the secreted. The catalysed reaction is Eliminative cleavage of (1-&gt;4)-alpha-D-galacturonan methyl ester to give oligosaccharides with 4-deoxy-6-O-methyl-alpha-D-galact-4-enuronosyl groups at their non-reducing ends.. Pectinolytic enzymes consist of four classes of enzymes: pectin lyase, polygalacturonase, pectin methylesterase and rhamnogalacturonase. Among pectinolytic enzymes, pectin lyase is the most important in depolymerization of pectin, since it cleaves internal glycosidic bonds of highly methylated pectins. This chain is Probable pectin lyase A (pelA), found in Aspergillus oryzae (strain ATCC 42149 / RIB 40) (Yellow koji mold).